The following is a 497-amino-acid chain: Serine hydroxymethyltransferase (497 aa).

(6S)-5,6,7,8-tetrahydrofolate-binding positions include leucine 176 and 180–182 (GHL). Lysine 289 bears the N6-(pyridoxal phosphate)lysine mark.

This sequence belongs to the SHMT family. In terms of assembly, homodimer. Pyridoxal 5'-phosphate serves as cofactor.

Its subcellular location is the cytoplasm. The catalysed reaction is (6R)-5,10-methylene-5,6,7,8-tetrahydrofolate + glycine + H2O = (6S)-5,6,7,8-tetrahydrofolate + L-serine. It functions in the pathway one-carbon metabolism; tetrahydrofolate interconversion. It participates in amino-acid biosynthesis; glycine biosynthesis; glycine from L-serine: step 1/1. Catalyzes the reversible interconversion of serine and glycine with tetrahydrofolate (THF) serving as the one-carbon carrier. This reaction serves as the major source of one-carbon groups required for the biosynthesis of purines, thymidylate, methionine, and other important biomolecules. Also exhibits THF-independent aldolase activity toward beta-hydroxyamino acids, producing glycine and aldehydes, via a retro-aldol mechanism. This chain is Serine hydroxymethyltransferase, found in Chlamydia trachomatis serovar A (strain ATCC VR-571B / DSM 19440 / HAR-13).